Here is a 410-residue protein sequence, read N- to C-terminus: UDP-N-acetylglucosamine--N-acetylmuramyl-(pentapeptide) pyrophosphoryl-undecaprenol N-acetylglucosamine transferase (410 aa).

Positions 1–34 are disordered; it reads MKDTVSQPAGGRGATAPRPADAASPSCGSSPSAD. A compositionally biased stretch (low complexity) spans 14–34; the sequence is ATAPRPADAASPSCGSSPSAD. Residues 45–47, asparagine 167, arginine 204, serine 238, and glutamine 334 contribute to the UDP-N-acetyl-alpha-D-glucosamine site; that span reads TAG.

It belongs to the glycosyltransferase 28 family. MurG subfamily.

It localises to the cell membrane. It carries out the reaction di-trans,octa-cis-undecaprenyl diphospho-N-acetyl-alpha-D-muramoyl-L-alanyl-D-glutamyl-meso-2,6-diaminopimeloyl-D-alanyl-D-alanine + UDP-N-acetyl-alpha-D-glucosamine = di-trans,octa-cis-undecaprenyl diphospho-[N-acetyl-alpha-D-glucosaminyl-(1-&gt;4)]-N-acetyl-alpha-D-muramoyl-L-alanyl-D-glutamyl-meso-2,6-diaminopimeloyl-D-alanyl-D-alanine + UDP + H(+). It functions in the pathway cell wall biogenesis; peptidoglycan biosynthesis. Its function is as follows. Cell wall formation. Catalyzes the transfer of a GlcNAc subunit on undecaprenyl-pyrophosphoryl-MurNAc-pentapeptide (lipid intermediate I) to form undecaprenyl-pyrophosphoryl-MurNAc-(pentapeptide)GlcNAc (lipid intermediate II). In Mycobacterium bovis (strain ATCC BAA-935 / AF2122/97), this protein is UDP-N-acetylglucosamine--N-acetylmuramyl-(pentapeptide) pyrophosphoryl-undecaprenol N-acetylglucosamine transferase.